Reading from the N-terminus, the 128-residue chain is Glycine cleavage system H protein (128 aa).

One can recognise a Lipoyl-binding domain in the interval 24–106; sequence SVTVGITAHA…YGDGWFFKIK (83 aa). At Lys65 the chain carries N6-lipoyllysine.

Belongs to the GcvH family. As to quaternary structure, the glycine cleavage system is composed of four proteins: P, T, L and H. (R)-lipoate is required as a cofactor.

Functionally, the glycine cleavage system catalyzes the degradation of glycine. The H protein shuttles the methylamine group of glycine from the P protein to the T protein. The polypeptide is Glycine cleavage system H protein (Chromobacterium violaceum (strain ATCC 12472 / DSM 30191 / JCM 1249 / CCUG 213 / NBRC 12614 / NCIMB 9131 / NCTC 9757 / MK)).